A 492-amino-acid chain; its full sequence is Catalase isozyme A (492 aa).

The tract at residues 1-23 (MDPCKFRPSSSFDTKTTTTNAGA) is disordered. Residues 8-21 (PSSSFDTKTTTTNA) are compositionally biased toward polar residues. Catalysis depends on residues H65 and N138. Heme is bound at residue Y348.

The protein belongs to the catalase family. Homotetramer. Heme serves as cofactor.

It localises to the peroxisome. The protein localises to the glyoxysome. The enzyme catalyses 2 H2O2 = O2 + 2 H2O. Functionally, occurs in almost all aerobically respiring organisms and serves to protect cells from the toxic effects of hydrogen peroxide. The protein is Catalase isozyme A of Oryza sativa subsp. indica (Rice).